A 389-amino-acid polypeptide reads, in one-letter code: Lipid-A-disaccharide synthase (389 aa).

Belongs to the LpxB family.

The catalysed reaction is a lipid X + a UDP-2-N,3-O-bis[(3R)-3-hydroxyacyl]-alpha-D-glucosamine = a lipid A disaccharide + UDP + H(+). It participates in bacterial outer membrane biogenesis; LPS lipid A biosynthesis. Functionally, condensation of UDP-2,3-diacylglucosamine and 2,3-diacylglucosamine-1-phosphate to form lipid A disaccharide, a precursor of lipid A, a phosphorylated glycolipid that anchors the lipopolysaccharide to the outer membrane of the cell. The polypeptide is Lipid-A-disaccharide synthase (Burkholderia orbicola (strain MC0-3)).